The primary structure comprises 373 residues: ATP-dependent 6-phosphofructokinase (373 aa).

ATP contacts are provided by residues Gly12, 74-75 (RD), and 110-113 (GGGT). Residues 133–135 (TID), Arg170, 177–179 (MGH), Glu230, Arg291, and 297–300 (YVQR) contribute to the substrate site. Asp135 serves as the catalytic Proton acceptor.

Belongs to the phosphofructokinase type A (PFKA) family. Mixed-substrate PFK group III subfamily. Homodimer or homotetramer. Mg(2+) serves as cofactor.

The protein resides in the cytoplasm. It catalyses the reaction beta-D-fructose 6-phosphate + ATP = beta-D-fructose 1,6-bisphosphate + ADP + H(+). Its pathway is carbohydrate degradation; glycolysis; D-glyceraldehyde 3-phosphate and glycerone phosphate from D-glucose: step 3/4. Catalyzes the phosphorylation of D-fructose 6-phosphate to fructose 1,6-bisphosphate by ATP, the first committing step of glycolysis. The protein is ATP-dependent 6-phosphofructokinase of Propionibacterium freudenreichii subsp. shermanii (strain ATCC 9614 / DSM 4902 / CIP 103027 / NCIMB 8099 / CIRM-BIA1).